The chain runs to 260 residues: NAD kinase (260 aa).

Asp-54 serves as the catalytic Proton acceptor. NAD(+) contacts are provided by residues 54 to 55 (DG), 123 to 124 (ND), Arg-150, Asp-152, and 163 to 168 (TAYSLS).

This sequence belongs to the NAD kinase family. It depends on a divalent metal cation as a cofactor.

The protein resides in the cytoplasm. The catalysed reaction is NAD(+) + ATP = ADP + NADP(+) + H(+). In terms of biological role, involved in the regulation of the intracellular balance of NAD and NADP, and is a key enzyme in the biosynthesis of NADP. Catalyzes specifically the phosphorylation on 2'-hydroxyl of the adenosine moiety of NAD to yield NADP. The sequence is that of NAD kinase from Caldicellulosiruptor saccharolyticus (strain ATCC 43494 / DSM 8903 / Tp8T 6331).